Here is a 543-residue protein sequence, read N- to C-terminus: CTP synthase (543 aa).

The segment at 1–265 (MARYIFITGG…DDEVLAAFGI (265 aa)) is amidoligase domain. CTP is bound at residue serine 13. A UTP-binding site is contributed by serine 13. 14-19 (SLGKGL) contributes to the ATP binding site. Residue tyrosine 54 coordinates L-glutamine. Residue aspartate 71 coordinates ATP. Residues aspartate 71 and glutamate 139 each contribute to the Mg(2+) site. CTP contacts are provided by residues 146-148 (DIE), 186-191 (KTKPTQ), and lysine 222. UTP contacts are provided by residues 186-191 (KTKPTQ) and lysine 222. 238 to 240 (RDV) provides a ligand contact to ATP. The Glutamine amidotransferase type-1 domain occupies 291–542 (TIAIVGKYTG…VQAAVVQSRL (252 aa)). Glycine 353 lines the L-glutamine pocket. Residue cysteine 380 is the Nucleophile; for glutamine hydrolysis of the active site. L-glutamine-binding positions include 381-384 (FGMQ), glutamate 404, and arginine 470. Residues histidine 515 and glutamate 517 contribute to the active site.

The protein belongs to the CTP synthase family. In terms of assembly, homotetramer.

The enzyme catalyses UTP + L-glutamine + ATP + H2O = CTP + L-glutamate + ADP + phosphate + 2 H(+). The catalysed reaction is L-glutamine + H2O = L-glutamate + NH4(+). It carries out the reaction UTP + NH4(+) + ATP = CTP + ADP + phosphate + 2 H(+). Its pathway is pyrimidine metabolism; CTP biosynthesis via de novo pathway; CTP from UDP: step 2/2. Its activity is regulated as follows. Allosterically activated by GTP, when glutamine is the substrate; GTP has no effect on the reaction when ammonia is the substrate. The allosteric effector GTP functions by stabilizing the protein conformation that binds the tetrahedral intermediate(s) formed during glutamine hydrolysis. Inhibited by the product CTP, via allosteric rather than competitive inhibition. In terms of biological role, catalyzes the ATP-dependent amination of UTP to CTP with either L-glutamine or ammonia as the source of nitrogen. Regulates intracellular CTP levels through interactions with the four ribonucleotide triphosphates. The protein is CTP synthase of Rhodopseudomonas palustris (strain BisB18).